Reading from the N-terminus, the 172-residue chain is Putative phosphoesterase BT9727_1129 (172 aa).

H34 serves as the catalytic Proton donor. 2 consecutive short sequence motifs (HXTX) follow at residues 34 to 37 (HITL) and 115 to 118 (HLTI). H115 (proton acceptor) is an active-site residue.

It belongs to the 2H phosphoesterase superfamily. YjcG family.

This Bacillus thuringiensis subsp. konkukian (strain 97-27) protein is Putative phosphoesterase BT9727_1129.